The following is a 235-amino-acid chain: Protein GrpE (235 aa).

Composition is skewed to basic and acidic residues over residues 1-16 and 24-35; these read MENK…HEKN and NNVKKENLHEDQ. The segment at 1–51 is disordered; sequence MENKNQKHNNEFHEKNQQSQKDNNNVKKENLHEDQSDLNDANFDDGGKKNK.

The protein belongs to the GrpE family. As to quaternary structure, homodimer.

The protein localises to the cytoplasm. Functionally, participates actively in the response to hyperosmotic and heat shock by preventing the aggregation of stress-denatured proteins, in association with DnaK and GrpE. It is the nucleotide exchange factor for DnaK and may function as a thermosensor. Unfolded proteins bind initially to DnaJ; upon interaction with the DnaJ-bound protein, DnaK hydrolyzes its bound ATP, resulting in the formation of a stable complex. GrpE releases ADP from DnaK; ATP binding to DnaK triggers the release of the substrate protein, thus completing the reaction cycle. Several rounds of ATP-dependent interactions between DnaJ, DnaK and GrpE are required for fully efficient folding. In Malacoplasma penetrans (strain HF-2) (Mycoplasma penetrans), this protein is Protein GrpE.